Here is a 386-residue protein sequence, read N- to C-terminus: Phosphoglycerate kinase (386 aa).

Residues 21 to 23, arginine 36, 59 to 62, arginine 112, and arginine 145 contribute to the substrate site; these read DLN and HLGR. ATP-binding positions include lysine 196, glutamate 313, and 339–342; that span reads GGDT.

The protein belongs to the phosphoglycerate kinase family. Monomer.

Its subcellular location is the cytoplasm. The enzyme catalyses (2R)-3-phosphoglycerate + ATP = (2R)-3-phospho-glyceroyl phosphate + ADP. It participates in carbohydrate degradation; glycolysis; pyruvate from D-glyceraldehyde 3-phosphate: step 2/5. This is Phosphoglycerate kinase from Haemophilus influenzae (strain 86-028NP).